Consider the following 358-residue polypeptide: Alanine racemase (358 aa).

Lys-35 (proton acceptor; specific for D-alanine) is an active-site residue. Lys-35 is subject to N6-(pyridoxal phosphate)lysine. Residue Arg-130 participates in substrate binding. The active-site Proton acceptor; specific for L-alanine is Tyr-255. Met-303 contributes to the substrate binding site.

The protein belongs to the alanine racemase family. It depends on pyridoxal 5'-phosphate as a cofactor.

It catalyses the reaction L-alanine = D-alanine. Its pathway is amino-acid biosynthesis; D-alanine biosynthesis; D-alanine from L-alanine: step 1/1. Catalyzes the interconversion of L-alanine and D-alanine. May also act on other amino acids. The chain is Alanine racemase (alr) from Shewanella sp. (strain MR-7).